Consider the following 219-residue polypeptide: Probable nicotinate-nucleotide adenylyltransferase (219 aa).

It belongs to the NadD family.

It carries out the reaction nicotinate beta-D-ribonucleotide + ATP + H(+) = deamido-NAD(+) + diphosphate. Its pathway is cofactor biosynthesis; NAD(+) biosynthesis; deamido-NAD(+) from nicotinate D-ribonucleotide: step 1/1. Functionally, catalyzes the reversible adenylation of nicotinate mononucleotide (NaMN) to nicotinic acid adenine dinucleotide (NaAD). This is Probable nicotinate-nucleotide adenylyltransferase from Pseudomonas putida (strain W619).